A 67-amino-acid chain; its full sequence is Coiled-coil domain-containing protein 179 (67 aa).

2 disordered regions span residues 1-32 (MCLRVKDEEPAQVYPEGPRRHHPSDVSTRQSV) and 47-67 (RKLGKRFARPNPIPDTGILWT). The stretch at 27 to 53 (STRQSVEKRINYMQNLQKEKRKLGKRF) forms a coiled coil.

This Mus musculus (Mouse) protein is Coiled-coil domain-containing protein 179 (Ccdc179).